Here is a 315-residue protein sequence, read N- to C-terminus: C1GALT1-specific chaperone 1-like protein (315 aa).

The Cytoplasmic portion of the chain corresponds to 1–8; that stretch reads MVSASGTS. Residues 9–29 form a helical; Signal-anchor for type II membrane protein membrane-spanning segment; the sequence is FFKGMLLGSISWVLITMFGQI. Over 30–315 the chain is Lumenal; the sequence is HIRHRGQTQD…FLPPVGSEND (286 aa). N-linked (GlcNAc...) asparagine glycosylation is found at N55 and N301.

It belongs to the glycosyltransferase 31 family. Beta3-Gal-T subfamily.

The protein localises to the membrane. The protein is C1GALT1-specific chaperone 1-like protein of Homo sapiens (Human).